We begin with the raw amino-acid sequence, 85 residues long: Conotoxin Cap15b (85 aa).

The signal sequence occupies residues methionine 1 to serine 23. A propeptide spanning residues aspartate 24 to arginine 49 is cleaved from the precursor. Glutamine 50 carries the post-translational modification Pyrrolidone carboxylic acid.

Belongs to the conotoxin O2 superfamily. Post-translationally, contains 4 disulfide bonds. As to expression, expressed by the venom duct.

The protein localises to the secreted. The protein is Conotoxin Cap15b of Conus capitaneus (Captain cone).